Consider the following 358-residue polypeptide: Gap junction alpha-5 protein (358 aa).

The Cytoplasmic segment spans residues 1-19 (MGDWSFLGEFLEEVHKHST). The helical transmembrane segment at 20–40 (VIGKVWLTVLFIFRMLVLGTA) threads the bilayer. Residues 41–76 (AESSWGDEQADFQCDTMQPGCGNVCYDQAFPISHIR) are Extracellular-facing. A helical membrane pass occupies residues 77-97 (YWVLQIIFVSTPSLVYMGHAM). Residues 98–164 (HTVRMQEKRK…CSILIRTTME (67 aa)) lie on the Cytoplasmic side of the membrane. A helical transmembrane segment spans residues 165-185 (VAFIVGQYLLYGIFLDTLHVC). At 186-205 (RRSPCPHPVNCYVSRPTEKN) the chain is on the extracellular side. Residues 206–226 (VFIVFMLAVAALSLFLSLAEL) traverse the membrane as a helical segment. The Cytoplasmic segment spans residues 227–358 (YHLGWKKLRQ…SKARSDDLSV (132 aa)). Positions 318-358 (AQKPEVPNGASPGHRLPHGYQSDKRRLSKASSKARSDDLSV) are disordered. Ser353 and Ser357 each carry phosphoserine.

Belongs to the connexin family. Alpha-type (group II) subfamily. A connexon is composed of a hexamer of connexins.

It is found in the cell membrane. Its subcellular location is the cell junction. It localises to the gap junction. In terms of biological role, one gap junction consists of a cluster of closely packed pairs of transmembrane channels, the connexons, through which materials of low MW diffuse from one cell to a neighboring cell. This chain is Gap junction alpha-5 protein (GJA5), found in Canis lupus familiaris (Dog).